Reading from the N-terminus, the 280-residue chain is Protein synthesis inhibitor II (280 aa).

Position 1 is an N-acetylalanine (alanine 1). Glutamate 174 is an active-site residue.

The protein belongs to the ribosome-inactivating protein family. Type 1 RIP subfamily.

The protein resides in the cytoplasm. The catalysed reaction is Endohydrolysis of the N-glycosidic bond at one specific adenosine on the 28S rRNA.. Its function is as follows. Inhibits the elongation phase of protein synthesis. It inactivates fungal ribosomes even more effectively than mammalian ribosomes and is thought to function as a constitutive antifungal agent in plants. In Hordeum vulgare (Barley), this protein is Protein synthesis inhibitor II (RIP30A).